A 133-amino-acid chain; its full sequence is Small ribosomal subunit protein uS8 (133 aa).

Belongs to the universal ribosomal protein uS8 family. As to quaternary structure, part of the 30S ribosomal subunit.

Its function is as follows. One of the primary rRNA binding proteins, it binds directly to 16S rRNA central domain where it helps coordinate assembly of the platform of the 30S subunit. This chain is Small ribosomal subunit protein uS8, found in Desulfurococcus amylolyticus (strain DSM 18924 / JCM 16383 / VKM B-2413 / 1221n) (Desulfurococcus kamchatkensis).